The sequence spans 514 residues: Peptide chain release factor 3 (514 aa).

The region spanning Lys8 to His268 is the tr-type G domain. GTP-binding positions include Ser17–Thr24, Asp85–His89, and Asn139–Asp142.

It belongs to the TRAFAC class translation factor GTPase superfamily. Classic translation factor GTPase family. PrfC subfamily.

Its subcellular location is the cytoplasm. Its function is as follows. Increases the formation of ribosomal termination complexes and stimulates activities of RF-1 and RF-2. It binds guanine nucleotides and has strong preference for UGA stop codons. It may interact directly with the ribosome. The stimulation of RF-1 and RF-2 is significantly reduced by GTP and GDP, but not by GMP. The protein is Peptide chain release factor 3 of Streptococcus thermophilus (strain CNRZ 1066).